The primary structure comprises 599 residues: Glutamine--fructose-6-phosphate aminotransferase [isomerizing] (599 aa).

Cys2 functions as the Nucleophile; for GATase activity in the catalytic mechanism. The Glutamine amidotransferase type-2 domain maps to 2–223 (CGIIGYIGNE…DRDIVILRKE (222 aa)). SIS domains follow at residues 286-423 (LGKE…IIGK) and 452-589 (IAEE…VDKP). Lys594 (for Fru-6P isomerization activity) is an active-site residue.

In terms of assembly, homodimer.

Its subcellular location is the cytoplasm. It carries out the reaction D-fructose 6-phosphate + L-glutamine = D-glucosamine 6-phosphate + L-glutamate. Its function is as follows. Catalyzes the first step in hexosamine metabolism, converting fructose-6P into glucosamine-6P using glutamine as a nitrogen source. This chain is Glutamine--fructose-6-phosphate aminotransferase [isomerizing] (glmS), found in Methanococcus maripaludis (strain DSM 14266 / JCM 13030 / NBRC 101832 / S2 / LL).